The chain runs to 586 residues: Monoterpene synthase TPS4, chloroplastic (586 aa).

The N-terminal 47 residues, 1-47 (MAATRNLSLLAQSSQPWAGIYGSHGSPRPISSWLRRQSIAKTSYICM), are a transit peptide targeting the chloroplast. Mg(2+)-binding residues include Asp-340, Asp-344, Asp-485, Thr-489, and Glu-493. Positions 340 to 344 (DDIFD) match the DDXXD motif motif.

The protein belongs to the terpene synthase family. Tpsg subfamily. In terms of assembly, monomer. Requires Mg(2+) as cofactor.

The protein localises to the plastid. It is found in the chloroplast. It catalyses the reaction (2E)-geranyl diphosphate + H2O = (2E)-geraniol + diphosphate. It participates in secondary metabolite biosynthesis; terpenoid biosynthesis. In terms of biological role, monoterpene synthase involved in the biosynthesis of volatile organic compounds. Mediates the conversion of (2E)-geranyl diphosphate (GPP) into the acyclic monoterpene, geraniol. Does not use (2E,6E)-farnesyl diphosphate (FPP) as substrate. In Cananga odorata (Ylang-ylang tree), this protein is Monoterpene synthase TPS4, chloroplastic.